Here is a 144-residue protein sequence, read N- to C-terminus: Large ribosomal subunit protein uL16 (144 aa).

This sequence belongs to the universal ribosomal protein uL16 family. As to quaternary structure, part of the 50S ribosomal subunit.

Its function is as follows. Binds 23S rRNA and is also seen to make contacts with the A and possibly P site tRNAs. The chain is Large ribosomal subunit protein uL16 from Thermoanaerobacter sp. (strain X514).